An 842-amino-acid polypeptide reads, in one-letter code: Probable cleavage and polyadenylation specificity factor subunit 2 (842 aa).

Over residues 414-425 the composition is skewed to basic and acidic residues; it reads AEETRIRMERAR. Disordered stretches follow at residues 414–442 and 708–747; these read AEET…DDIA and METF…SIPI. Acidic residues predominate over residues 432–441; the sequence is ESDDSDDDDI. The segment covering 731 to 747 has biased composition (polar residues); that stretch reads SNGQSKENDENASSIPI.

The protein belongs to the metallo-beta-lactamase superfamily. RNA-metabolizing metallo-beta-lactamase-like family. CPSF2/YSH1 subfamily. As to quaternary structure, CPSF is a heterotetramer composed of four distinct subunits 160, 100, 70 and 30 kDa.

It localises to the nucleus. CPSF plays a key role in pre-mRNA 3'-end formation, recognizing the AAUAAA signal sequence and interacting with poly(A)polymerase and other factors to bring about cleavage and poly(A) addition. This chain is Probable cleavage and polyadenylation specificity factor subunit 2, found in Caenorhabditis briggsae.